A 220-amino-acid polypeptide reads, in one-letter code: Cell division protein SepF (220 aa).

The tract at residues 33-82 (GAARGYARRPREDRFEEEGYIDRAGREYDDRPAPREYDEPPIYRGGYDEP) is disordered. Over residues 52 to 70 (YIDRAGREYDDRPAPREYD) the composition is skewed to basic and acidic residues.

Belongs to the SepF family. Homodimer. Interacts with FtsZ.

The protein resides in the cytoplasm. In terms of biological role, cell division protein that is part of the divisome complex and is recruited early to the Z-ring. Probably stimulates Z-ring formation, perhaps through the cross-linking of FtsZ protofilaments. Its function overlaps with FtsA. The chain is Cell division protein SepF from Mycobacterium sp. (strain JLS).